The chain runs to 198 residues: Holliday junction branch migration complex subunit RuvA (198 aa).

The tract at residues 1 to 64 (MYEYIKGKYI…EDFIGLYGFD (64 aa)) is domain I. A domain II region spans residues 65 to 143 (SKEELEMFKL…PDELVDSSLE (79 aa)). The segment at 144-149 (IDTKDN) is flexible linker. Residues 150–198 (ENVMALSEALSALIALGYSEKEAESVLKKIDKNDSVENIIKNALKALMG) form a domain III region.

Belongs to the RuvA family. In terms of assembly, homotetramer. Forms an RuvA(8)-RuvB(12)-Holliday junction (HJ) complex. HJ DNA is sandwiched between 2 RuvA tetramers; dsDNA enters through RuvA and exits via RuvB. An RuvB hexamer assembles on each DNA strand where it exits the tetramer. Each RuvB hexamer is contacted by two RuvA subunits (via domain III) on 2 adjacent RuvB subunits; this complex drives branch migration. In the full resolvosome a probable DNA-RuvA(4)-RuvB(12)-RuvC(2) complex forms which resolves the HJ.

It is found in the cytoplasm. In terms of biological role, the RuvA-RuvB-RuvC complex processes Holliday junction (HJ) DNA during genetic recombination and DNA repair, while the RuvA-RuvB complex plays an important role in the rescue of blocked DNA replication forks via replication fork reversal (RFR). RuvA specifically binds to HJ cruciform DNA, conferring on it an open structure. The RuvB hexamer acts as an ATP-dependent pump, pulling dsDNA into and through the RuvAB complex. HJ branch migration allows RuvC to scan DNA until it finds its consensus sequence, where it cleaves and resolves the cruciform DNA. This Clostridium beijerinckii (strain ATCC 51743 / NCIMB 8052) (Clostridium acetobutylicum) protein is Holliday junction branch migration complex subunit RuvA.